The chain runs to 94 residues: Co-chaperonin GroES (94 aa).

It belongs to the GroES chaperonin family. As to quaternary structure, heptamer of 7 subunits arranged in a ring. Interacts with the chaperonin GroEL.

Its subcellular location is the cytoplasm. In terms of biological role, together with the chaperonin GroEL, plays an essential role in assisting protein folding. The GroEL-GroES system forms a nano-cage that allows encapsulation of the non-native substrate proteins and provides a physical environment optimized to promote and accelerate protein folding. GroES binds to the apical surface of the GroEL ring, thereby capping the opening of the GroEL channel. In Exiguobacterium sp. (strain ATCC BAA-1283 / AT1b), this protein is Co-chaperonin GroES.